The chain runs to 130 residues: Protein BLT4 (130 aa).

Residues Met-1 to Ala-25 form the signal peptide. The disordered stretch occupies residues Val-80–Gly-130. Over residues Thr-84 to Ala-110 the composition is skewed to low complexity. Positions Ser-113–Gly-130 are enriched in basic and acidic residues.

Belongs to the plant LTP family. In terms of tissue distribution, shoot meristem.

Possible dehydrative stress responsive protein. Not shown to have lipid transfer activity. The protein is Protein BLT4 (BLT4) of Hordeum vulgare (Barley).